Reading from the N-terminus, the 458-residue chain is tRNA modification GTPase MnmE (458 aa).

Arginine 26, glutamate 88, and arginine 127 together coordinate (6S)-5-formyl-5,6,7,8-tetrahydrofolate. The 155-residue stretch at 224 to 378 (GLSTAIIGRP…IEERINDIFF (155 aa)) folds into the TrmE-type G domain. Residue asparagine 234 participates in K(+) binding. GTP is bound by residues 234 to 239 (NVGKSS), 253 to 259 (TDIEGTT), and 278 to 281 (DTAG). Residue serine 238 coordinates Mg(2+). Residues threonine 253, isoleucine 255, and threonine 258 each coordinate K(+). Residue threonine 259 participates in Mg(2+) binding. (6S)-5-formyl-5,6,7,8-tetrahydrofolate is bound at residue lysine 458.

This sequence belongs to the TRAFAC class TrmE-Era-EngA-EngB-Septin-like GTPase superfamily. TrmE GTPase family. As to quaternary structure, homodimer. Heterotetramer of two MnmE and two MnmG subunits. K(+) is required as a cofactor.

It is found in the cytoplasm. Functionally, exhibits a very high intrinsic GTPase hydrolysis rate. Involved in the addition of a carboxymethylaminomethyl (cmnm) group at the wobble position (U34) of certain tRNAs, forming tRNA-cmnm(5)s(2)U34. This Streptococcus agalactiae serotype Ia (strain ATCC 27591 / A909 / CDC SS700) protein is tRNA modification GTPase MnmE.